The sequence spans 256 residues: Glutamate racemase (256 aa).

Substrate contacts are provided by residues 12–13 (DS) and 44–45 (YG). Cys-75 acts as the Proton donor/acceptor in catalysis. 76-77 (NT) provides a ligand contact to substrate. Cys-186 acts as the Proton donor/acceptor in catalysis. 187–188 (TH) contributes to the substrate binding site.

This sequence belongs to the aspartate/glutamate racemases family.

The catalysed reaction is L-glutamate = D-glutamate. Its pathway is cell wall biogenesis; peptidoglycan biosynthesis. Its function is as follows. Provides the (R)-glutamate required for cell wall biosynthesis. This chain is Glutamate racemase, found in Clostridium acetobutylicum (strain ATCC 824 / DSM 792 / JCM 1419 / IAM 19013 / LMG 5710 / NBRC 13948 / NRRL B-527 / VKM B-1787 / 2291 / W).